The primary structure comprises 360 residues: Photosystem II protein D1 3 (360 aa).

A run of 3 helical transmembrane segments spans residues 29 to 46, 118 to 133, and 142 to 156; these read YVGW…TATI, HFLL…EWEL, and WIAV…AATA. His-118 contacts chlorophyll a. Position 126 (Tyr-126) interacts with pheophytin a. Positions 170 and 189 each coordinate [CaMn4O5] cluster. Residues 197 to 218 traverse the membrane as a helical segment; it reads FHMLGVAGVFGGALFSAMHGSL. Chlorophyll a is bound at residue His-198. A quinone is bound by residues His-215 and 264-265; that span reads SF. His-215 contributes to the Fe cation binding site. Residue His-272 participates in Fe cation binding. Residues 274-288 form a helical membrane-spanning segment; the sequence is FLAAWPVIGIWFASL. Residues His-332, Glu-333, Asp-342, and Ala-344 each coordinate [CaMn4O5] cluster. Residues 345–360 constitute a propeptide that is removed on maturation; it reads AGDQAPVALQAPAING.

Belongs to the reaction center PufL/M/PsbA/D family. As to quaternary structure, PSII is composed of 1 copy each of membrane proteins PsbA, PsbB, PsbC, PsbD, PsbE, PsbF, PsbH, PsbI, PsbJ, PsbK, PsbL, PsbM, PsbT, PsbX, PsbY, PsbZ, Psb30/Ycf12, peripheral proteins PsbO, CyanoQ (PsbQ), PsbU, PsbV and a large number of cofactors. It forms dimeric complexes. Requires The D1/D2 heterodimer binds P680, chlorophylls that are the primary electron donor of PSII, and subsequent electron acceptors. It shares a non-heme iron and each subunit binds pheophytin, quinone, additional chlorophylls, carotenoids and lipids. D1 provides most of the ligands for the Mn4-Ca-O5 cluster of the oxygen-evolving complex (OEC). There is also a Cl(-1) ion associated with D1 and D2, which is required for oxygen evolution. The PSII complex binds additional chlorophylls, carotenoids and specific lipids. as cofactor. Tyr-161 forms a radical intermediate that is referred to as redox-active TyrZ, YZ or Y-Z. Post-translationally, C-terminally processed by CtpA; processing is essential to allow assembly of the oxygen-evolving complex and thus photosynthetic growth.

It is found in the cellular thylakoid membrane. It catalyses the reaction 2 a plastoquinone + 4 hnu + 2 H2O = 2 a plastoquinol + O2. In terms of biological role, photosystem II (PSII) is a light-driven water:plastoquinone oxidoreductase that uses light energy to abstract electrons from H(2)O, generating O(2) and a proton gradient subsequently used for ATP formation. It consists of a core antenna complex that captures photons, and an electron transfer chain that converts photonic excitation into a charge separation. The D1/D2 (PsbA/PsbD) reaction center heterodimer binds P680, the primary electron donor of PSII as well as several subsequent electron acceptors. The polypeptide is Photosystem II protein D1 3 (Picosynechococcus sp. (strain ATCC 27264 / PCC 7002 / PR-6) (Agmenellum quadruplicatum)).